A 233-amino-acid chain; its full sequence is Uridylate kinase (233 aa).

9 to 10 (GS) contacts ATP. UMP is bound at residue G43. ATP is bound by residues G44 and R48. UMP-binding positions include D65 and 113 to 119 (VTPGQTT). ATP contacts are provided by T139, Y145, and D148.

Belongs to the UMP kinase family. Homohexamer.

The protein localises to the cytoplasm. The enzyme catalyses UMP + ATP = UDP + ADP. The protein operates within pyrimidine metabolism; CTP biosynthesis via de novo pathway; UDP from UMP (UMPK route): step 1/1. Inhibited by UTP. In terms of biological role, catalyzes the reversible phosphorylation of UMP to UDP. The polypeptide is Uridylate kinase (Methanosarcina acetivorans (strain ATCC 35395 / DSM 2834 / JCM 12185 / C2A)).